The following is a 73-amino-acid chain: MAKQSKYQSKQFEQLSYDLITILEKHKAPVDLSIMALGNLVSNILLENIQTETQRMVLADTFSTALKNSLKAR.

Belongs to the UPF0352 family.

This is UPF0352 protein HD_1515 from Haemophilus ducreyi (strain 35000HP / ATCC 700724).